The primary structure comprises 383 residues: Queuine tRNA-ribosyltransferase (383 aa).

Asp89 acts as the Proton acceptor in catalysis. Residues 89-93, Asp143, Gln187, and Gly214 each bind substrate; that span reads DSGGF. The RNA binding stretch occupies residues 245–251; sequence GVGDLID. Catalysis depends on Asp264, which acts as the Nucleophile. Residues 269-273 form an RNA binding; important for wobble base 34 recognition region; that stretch reads TRNAR. 4 residues coordinate Zn(2+): Cys302, Cys304, Cys307, and His333.

The protein belongs to the queuine tRNA-ribosyltransferase family. As to quaternary structure, homodimer. Within each dimer, one monomer is responsible for RNA recognition and catalysis, while the other monomer binds to the replacement base PreQ1. Zn(2+) is required as a cofactor.

The catalysed reaction is 7-aminomethyl-7-carbaguanine + guanosine(34) in tRNA = 7-aminomethyl-7-carbaguanosine(34) in tRNA + guanine. It functions in the pathway tRNA modification; tRNA-queuosine biosynthesis. Its function is as follows. Catalyzes the base-exchange of a guanine (G) residue with the queuine precursor 7-aminomethyl-7-deazaguanine (PreQ1) at position 34 (anticodon wobble position) in tRNAs with GU(N) anticodons (tRNA-Asp, -Asn, -His and -Tyr). Catalysis occurs through a double-displacement mechanism. The nucleophile active site attacks the C1' of nucleotide 34 to detach the guanine base from the RNA, forming a covalent enzyme-RNA intermediate. The proton acceptor active site deprotonates the incoming PreQ1, allowing a nucleophilic attack on the C1' of the ribose to form the product. After dissociation, two additional enzymatic reactions on the tRNA convert PreQ1 to queuine (Q), resulting in the hypermodified nucleoside queuosine (7-(((4,5-cis-dihydroxy-2-cyclopenten-1-yl)amino)methyl)-7-deazaguanosine). The sequence is that of Queuine tRNA-ribosyltransferase from Thermodesulfovibrio yellowstonii (strain ATCC 51303 / DSM 11347 / YP87).